The primary structure comprises 465 residues: UDP-N-acetylmuramoylalanine--D-glutamate ligase (465 aa).

127 to 133 contributes to the ATP binding site; the sequence is GSNGKST.

It belongs to the MurCDEF family.

The protein localises to the cytoplasm. It catalyses the reaction UDP-N-acetyl-alpha-D-muramoyl-L-alanine + D-glutamate + ATP = UDP-N-acetyl-alpha-D-muramoyl-L-alanyl-D-glutamate + ADP + phosphate + H(+). It participates in cell wall biogenesis; peptidoglycan biosynthesis. In terms of biological role, cell wall formation. Catalyzes the addition of glutamate to the nucleotide precursor UDP-N-acetylmuramoyl-L-alanine (UMA). The protein is UDP-N-acetylmuramoylalanine--D-glutamate ligase of Cereibacter sphaeroides (strain ATCC 17025 / ATH 2.4.3) (Rhodobacter sphaeroides).